We begin with the raw amino-acid sequence, 500 residues long: Probable cytosol aminopeptidase (500 aa).

Residues K264 and D269 each contribute to the Mn(2+) site. Residue K276 is part of the active site. Mn(2+) is bound by residues D287, D346, and E348. Residue R350 is part of the active site.

It belongs to the peptidase M17 family. Mn(2+) serves as cofactor.

It is found in the cytoplasm. It carries out the reaction Release of an N-terminal amino acid, Xaa-|-Yaa-, in which Xaa is preferably Leu, but may be other amino acids including Pro although not Arg or Lys, and Yaa may be Pro. Amino acid amides and methyl esters are also readily hydrolyzed, but rates on arylamides are exceedingly low.. The catalysed reaction is Release of an N-terminal amino acid, preferentially leucine, but not glutamic or aspartic acids.. Functionally, presumably involved in the processing and regular turnover of intracellular proteins. Catalyzes the removal of unsubstituted N-terminal amino acids from various peptides. This is Probable cytosol aminopeptidase from Afipia carboxidovorans (strain ATCC 49405 / DSM 1227 / KCTC 32145 / OM5) (Oligotropha carboxidovorans).